Consider the following 274-residue polypeptide: 16S rRNA (guanine(1405)-N(7))-methyltransferase (274 aa).

Residues 102 to 108 (HISTRER), alanine 133, aspartate 156, 182 to 183 (DL), leucine 198, and glutamine 207 contribute to the S-adenosyl-L-methionine site.

It belongs to the methyltransferase superfamily. Aminoglycoside resistance family.

It carries out the reaction guanosine(1405) in 16S rRNA + S-adenosyl-L-methionine = N(7)-methylguanosine(1405) in 16S rRNA + S-adenosyl-L-homocysteine. Functionally, specifically methylates the N(7) position of guanine 1405 in 16S rRNA. Confers resistance to various aminoglycosides, including gentamicin, kanamycin and sisomicin. This chain is 16S rRNA (guanine(1405)-N(7))-methyltransferase (sgm), found in Micromonospora zionensis.